Here is an 817-residue protein sequence, read N- to C-terminus: DNA mismatch repair protein MutS (817 aa).

604–611 contacts ATP; the sequence is GPNMSGKS.

The protein belongs to the DNA mismatch repair MutS family.

This protein is involved in the repair of mismatches in DNA. It is possible that it carries out the mismatch recognition step. This protein has a weak ATPase activity. The protein is DNA mismatch repair protein MutS of Petrotoga mobilis (strain DSM 10674 / SJ95).